We begin with the raw amino-acid sequence, 167 residues long: Biogenesis of lysosome-related organelles complex 1 subunit 6 (167 aa).

Residues 1–11 show a composition bias toward polar residues; the sequence is MLKSSNINSVL. Residues 1-38 form a disordered region; it reads MLKSSNINSVLNELPNDPARDSTAQSSHNGKPKQDAET. A coiled-coil region spans residues 102 to 160; it reads ARLNDMMSDVKRYKDKLTKIKKEMQGVYQRTKELKKRAANVAACKQRDYQRKLERLQHE.

This sequence belongs to the BLOC1S6 family. Component of the biogenesis of lysosome-related organelles complex-1 (BLOC-1) composed of Blos1, Blos2, Blos3, Blos4, Dysb, Muted, Pldn and Snapin. Interacts with Blos1, Blos4 and Dysb.

The protein resides in the synapse. It localises to the cytoplasm. It is found in the cytoskeleton. Its subcellular location is the myofibril. The protein localises to the sarcomere. The protein resides in the z line. Functionally, component of the biogenesis of lysosome-related organelles complex-1 (BLOC-1) involved in pigment granule biogenesis and membrane trafficking in synapses. In response to high synaptic activity at neuromuscular junctions, plays a key role in promoting efficient synaptic vesicle recycling and re-formation through early endosomes. This chain is Biogenesis of lysosome-related organelles complex 1 subunit 6, found in Drosophila melanogaster (Fruit fly).